The sequence spans 232 residues: Thiamine import ATP-binding protein ThiQ (232 aa).

In terms of domain architecture, ABC transporter spans Leu2–Ile230. Gly32 to Ser39 serves as a coordination point for ATP.

It belongs to the ABC transporter superfamily. Thiamine importer (TC 3.A.1.19.1) family. The complex is composed of two ATP-binding proteins (ThiQ), two transmembrane proteins (ThiP) and a solute-binding protein (ThiB).

Its subcellular location is the cell inner membrane. The catalysed reaction is thiamine(out) + ATP + H2O = thiamine(in) + ADP + phosphate + H(+). Functionally, part of the ABC transporter complex ThiBPQ involved in thiamine import. Responsible for energy coupling to the transport system. The polypeptide is Thiamine import ATP-binding protein ThiQ (Escherichia coli O6:K15:H31 (strain 536 / UPEC)).